The sequence spans 343 residues: Phosphoglycerate mutase-like protein 2 (343 aa).

A chloroplast-targeting transit peptide spans 1–35 (MIHQSMTSNLSFYISSVSHLSSPLPSLSRLSLRCC). The active-site Tele-phosphohistidine intermediate is H65. E177 (proton donor/acceptor) is an active-site residue. Residues 322-343 (MTNYPGTILTGEDASSDIADQK) form a disordered region.

It belongs to the phosphoglycerate mutase family.

The protein localises to the plastid. The protein resides in the chloroplast. Its function is as follows. May play a role in carbohydrates metabolism. This chain is Phosphoglycerate mutase-like protein 2, found in Arabidopsis thaliana (Mouse-ear cress).